Reading from the N-terminus, the 530-residue chain is Trigger factor (530 aa).

The PPIase FKBP-type domain occupies 162-243 (DDLVTIDLAG…VTKVCEQELP (82 aa)). The segment at 432-530 (NALELDRIQP…KTAAKDDKSK (99 aa)) is disordered. Basic and acidic residues-rich tracts occupy residues 459-478 (SAEK…EKAP) and 501-512 (KVVDAKSDDKPA).

The protein belongs to the FKBP-type PPIase family. Tig subfamily.

The protein resides in the cytoplasm. It carries out the reaction [protein]-peptidylproline (omega=180) = [protein]-peptidylproline (omega=0). In terms of biological role, involved in protein export. Acts as a chaperone by maintaining the newly synthesized protein in an open conformation. Functions as a peptidyl-prolyl cis-trans isomerase. The protein is Trigger factor of Cutibacterium acnes (strain DSM 16379 / KPA171202) (Propionibacterium acnes).